Here is a 764-residue protein sequence, read N- to C-terminus: Putative wall-associated receptor kinase-like 13 (764 aa).

Residues 1 to 26 (MRGNKNYYFLSLLYFLSLPILHFSSC) form the signal peptide. The Extracellular portion of the chain corresponds to 27 to 379 (THKCGDIQIP…HRCIDYHIPE (353 aa)). N-linked (GlcNAc...) asparagine glycans are attached at residues asparagine 78, asparagine 114, asparagine 121, asparagine 164, asparagine 233, asparagine 238, asparagine 259, and asparagine 283. The atypical EGF-like stretch occupies residues 308-372 (CTCDNHIASG…CINTSGGHRC (65 aa)). Cystine bridges form between cysteine 310-cysteine 323, cysteine 345-cysteine 363, and cysteine 352-cysteine 372. Residue asparagine 365 is glycosylated (N-linked (GlcNAc...) asparagine). A helical transmembrane segment spans residues 380–400 (VMLGLGAGFFVLIVGGGIWWW). The Cytoplasmic segment spans residues 401 to 764 (RKLLRKRRMT…SGSTEIARSM (364 aa)). The Protein kinase domain maps to 454–728 (FNDNRVIGQG…REVSTALERI (275 aa)). ATP-binding positions include 460–468 (IGQGGQGTV) and lysine 482. Tyrosine 527 carries the phosphotyrosine modification. Aspartate 579 (proton acceptor) is an active-site residue. Phosphothreonine occurs at positions 613 and 618. Position 626 is a phosphotyrosine (tyrosine 626).

This sequence belongs to the protein kinase superfamily. Ser/Thr protein kinase family.

The protein resides in the membrane. It catalyses the reaction L-seryl-[protein] + ATP = O-phospho-L-seryl-[protein] + ADP + H(+). It carries out the reaction L-threonyl-[protein] + ATP = O-phospho-L-threonyl-[protein] + ADP + H(+). Its function is as follows. Putative serine/threonine-protein kinase that may function as a signaling receptor of extracellular matrix component. In Arabidopsis thaliana (Mouse-ear cress), this protein is Putative wall-associated receptor kinase-like 13 (WAKL13).